Here is a 219-residue protein sequence, read N- to C-terminus: Phosphatidylserine decarboxylase proenzyme (219 aa).

Catalysis depends on Ser-188, which acts as the Schiff-base intermediate with substrate; via pyruvic acid. Ser-188 carries the post-translational modification Pyruvic acid (Ser); by autocatalysis.

Belongs to the phosphatidylserine decarboxylase family. PSD-A subfamily. As to quaternary structure, heterodimer of a large membrane-associated beta subunit and a small pyruvoyl-containing alpha subunit. The cofactor is pyruvate. Post-translationally, is synthesized initially as an inactive proenzyme. Formation of the active enzyme involves a self-maturation process in which the active site pyruvoyl group is generated from an internal serine residue via an autocatalytic post-translational modification. Two non-identical subunits are generated from the proenzyme in this reaction, and the pyruvate is formed at the N-terminus of the alpha chain, which is derived from the carboxyl end of the proenzyme. The post-translation cleavage follows an unusual pathway, termed non-hydrolytic serinolysis, in which the side chain hydroxyl group of the serine supplies its oxygen atom to form the C-terminus of the beta chain, while the remainder of the serine residue undergoes an oxidative deamination to produce ammonia and the pyruvoyl prosthetic group on the alpha chain.

The protein resides in the cell membrane. It carries out the reaction a 1,2-diacyl-sn-glycero-3-phospho-L-serine + H(+) = a 1,2-diacyl-sn-glycero-3-phosphoethanolamine + CO2. It participates in phospholipid metabolism; phosphatidylethanolamine biosynthesis; phosphatidylethanolamine from CDP-diacylglycerol: step 2/2. Catalyzes the formation of phosphatidylethanolamine (PtdEtn) from phosphatidylserine (PtdSer). This chain is Phosphatidylserine decarboxylase proenzyme, found in Trichlorobacter lovleyi (strain ATCC BAA-1151 / DSM 17278 / SZ) (Geobacter lovleyi).